The primary structure comprises 467 residues: Glutamate--tRNA ligase (467 aa).

The 'HIGH' region signature appears at Pro9–Gly19. A 'KMSKS' region motif is present at residues Lys250–Arg254. Lys253 contacts ATP.

Belongs to the class-I aminoacyl-tRNA synthetase family. Glutamate--tRNA ligase type 1 subfamily. In terms of assembly, monomer.

It localises to the cytoplasm. The catalysed reaction is tRNA(Glu) + L-glutamate + ATP = L-glutamyl-tRNA(Glu) + AMP + diphosphate. Its function is as follows. Catalyzes the attachment of glutamate to tRNA(Glu) in a two-step reaction: glutamate is first activated by ATP to form Glu-AMP and then transferred to the acceptor end of tRNA(Glu). The polypeptide is Glutamate--tRNA ligase (Mesomycoplasma hyopneumoniae (strain J / ATCC 25934 / NCTC 10110) (Mycoplasma hyopneumoniae)).